We begin with the raw amino-acid sequence, 321 residues long: 4-hydroxy-3-methylbut-2-enyl diphosphate reductase (321 aa).

Residue C13 coordinates [4Fe-4S] cluster. Positions 41 and 75 each coordinate (2E)-4-hydroxy-3-methylbut-2-enyl diphosphate. Dimethylallyl diphosphate is bound by residues H41 and H75. H41 and H75 together coordinate isopentenyl diphosphate. C97 serves as a coordination point for [4Fe-4S] cluster. H125 lines the (2E)-4-hydroxy-3-methylbut-2-enyl diphosphate pocket. H125 contacts dimethylallyl diphosphate. H125 lines the isopentenyl diphosphate pocket. E127 functions as the Proton donor in the catalytic mechanism. T168 serves as a coordination point for (2E)-4-hydroxy-3-methylbut-2-enyl diphosphate. C225 contributes to the [4Fe-4S] cluster binding site. Residues S253, S254, N255, and S302 each contribute to the (2E)-4-hydroxy-3-methylbut-2-enyl diphosphate site. Dimethylallyl diphosphate contacts are provided by S253, S254, N255, and S302. S253, S254, N255, and S302 together coordinate isopentenyl diphosphate.

The protein belongs to the IspH family. The cofactor is [4Fe-4S] cluster.

It carries out the reaction isopentenyl diphosphate + 2 oxidized [2Fe-2S]-[ferredoxin] + H2O = (2E)-4-hydroxy-3-methylbut-2-enyl diphosphate + 2 reduced [2Fe-2S]-[ferredoxin] + 2 H(+). The enzyme catalyses dimethylallyl diphosphate + 2 oxidized [2Fe-2S]-[ferredoxin] + H2O = (2E)-4-hydroxy-3-methylbut-2-enyl diphosphate + 2 reduced [2Fe-2S]-[ferredoxin] + 2 H(+). The protein operates within isoprenoid biosynthesis; dimethylallyl diphosphate biosynthesis; dimethylallyl diphosphate from (2E)-4-hydroxy-3-methylbutenyl diphosphate: step 1/1. It functions in the pathway isoprenoid biosynthesis; isopentenyl diphosphate biosynthesis via DXP pathway; isopentenyl diphosphate from 1-deoxy-D-xylulose 5-phosphate: step 6/6. Functionally, catalyzes the conversion of 1-hydroxy-2-methyl-2-(E)-butenyl 4-diphosphate (HMBPP) into a mixture of isopentenyl diphosphate (IPP) and dimethylallyl diphosphate (DMAPP). Acts in the terminal step of the DOXP/MEP pathway for isoprenoid precursor biosynthesis. In Pelodictyon phaeoclathratiforme (strain DSM 5477 / BU-1), this protein is 4-hydroxy-3-methylbut-2-enyl diphosphate reductase.